Reading from the N-terminus, the 463-residue chain is Glutamate--tRNA ligase (463 aa).

The short motif at 8–18 (PSPTGYLHIGG) is the 'HIGH' region element. The 'KMSKS' region signature appears at 236–240 (RLSKR). K239 is a binding site for ATP.

It belongs to the class-I aminoacyl-tRNA synthetase family. Glutamate--tRNA ligase type 1 subfamily. As to quaternary structure, monomer.

Its subcellular location is the cytoplasm. The catalysed reaction is tRNA(Glu) + L-glutamate + ATP = L-glutamyl-tRNA(Glu) + AMP + diphosphate. Functionally, catalyzes the attachment of glutamate to tRNA(Glu) in a two-step reaction: glutamate is first activated by ATP to form Glu-AMP and then transferred to the acceptor end of tRNA(Glu). The protein is Glutamate--tRNA ligase of Nitrosomonas eutropha (strain DSM 101675 / C91 / Nm57).